An 871-amino-acid chain; its full sequence is Translation initiation factor IF-2 (871 aa).

Disordered stretches follow at residues 60–101 (KKNI…QEVK) and 184–203 (ESLK…KKES). Over residues 61–72 (KNIKTPTAKKPK) the composition is skewed to basic residues. Residues 73 to 101 (KENIKEQEKLNESEKKEPKKEEKLKQEVK) are compositionally biased toward basic and acidic residues. The tr-type G domain occupies 370–537 (TRAPVITIMG…IVLLQADILE (168 aa)). The interval 379–386 (GHVDHGKT) is G1. GTP is bound at residue 379-386 (GHVDHGKT). Positions 404-408 (GITQH) are G2. Residues 425–428 (DTPG) form a G3 region. GTP contacts are provided by residues 425–429 (DTPGH) and 479–482 (NKMD). Residues 479–482 (NKMD) are G4. The interval 515–517 (SAK) is G5.

Belongs to the TRAFAC class translation factor GTPase superfamily. Classic translation factor GTPase family. IF-2 subfamily.

Its subcellular location is the cytoplasm. Functionally, one of the essential components for the initiation of protein synthesis. Protects formylmethionyl-tRNA from spontaneous hydrolysis and promotes its binding to the 30S ribosomal subunits. Also involved in the hydrolysis of GTP during the formation of the 70S ribosomal complex. The polypeptide is Translation initiation factor IF-2 (Campylobacter jejuni subsp. jejuni serotype O:6 (strain 81116 / NCTC 11828)).